Reading from the N-terminus, the 249-residue chain is Ribosomal RNA small subunit methyltransferase J (249 aa).

Residue Asp-169 participates in S-adenosyl-L-methionine binding.

The protein belongs to the methyltransferase superfamily. RsmJ family.

Its subcellular location is the cytoplasm. The enzyme catalyses guanosine(1516) in 16S rRNA + S-adenosyl-L-methionine = N(2)-methylguanosine(1516) in 16S rRNA + S-adenosyl-L-homocysteine + H(+). In terms of biological role, specifically methylates the guanosine in position 1516 of 16S rRNA. The sequence is that of Ribosomal RNA small subunit methyltransferase J from Buchnera aphidicola subsp. Schizaphis graminum (strain Sg).